A 378-amino-acid polypeptide reads, in one-letter code: MKYQDLLAIAGCIANAGAVSVSGAAEGFAKGVTGGGSATAVYPSTTAELVSYLGDSEARVIVLTKTFDFTGTEGTTTATGCAPWGTASACQLAINQNNWCTNYEPNAPSVSVTYDNAGILGITVKSNKSLIGSGSSGVIKGKGLRIVSGASNIIIQNIAITDINPKYVWGGDAITIDNADMVWIDHVTTARIGRQHLVLGTSASNRVTISNNYFNGVSSYSATCDGYHYWGIYLDGSNDLVTMKGNYIYHFSGRSPKVQGNTLLHAVNNYWYDSSGHAFEIGSGGYVLAEGNVFQNIDTIVQSPVDGQLFTSPDSNTNKVCSTYLGHVCQVNGFGSSGTFSQADTGFLSNFAGKNIASASAYTAVQSTVPSSAGQGKI.

The first 18 residues, 1–18 (MKYQDLLAIAGCIANAGA), serve as a signal peptide directing secretion. 2 cysteine pairs are disulfide-bonded: cysteine 81–cysteine 100 and cysteine 90–cysteine 224. N-linked (GlcNAc...) asparagine glycosylation is present at asparagine 127. Arginine 254 is a catalytic residue. The cysteines at positions 321 and 329 are disulfide-linked.

The protein belongs to the polysaccharide lyase 1 family.

It localises to the secreted. The catalysed reaction is Eliminative cleavage of (1-&gt;4)-alpha-D-galacturonan methyl ester to give oligosaccharides with 4-deoxy-6-O-methyl-alpha-D-galact-4-enuronosyl groups at their non-reducing ends.. Its function is as follows. Pectinolytic enzymes consist of four classes of enzymes: pectin lyase, polygalacturonase, pectin methylesterase and rhamnogalacturonase. Among pectinolytic enzymes, pectin lyase is the most important in depolymerization of pectin, since it cleaves internal glycosidic bonds of highly methylated pectins. In Aspergillus fumigatus (strain CBS 144.89 / FGSC A1163 / CEA10) (Neosartorya fumigata), this protein is Probable pectin lyase A (pelA).